The following is an 84-amino-acid chain: Putative membrane protein insertion efficiency factor (84 aa).

Belongs to the UPF0161 family.

It localises to the cell inner membrane. In terms of biological role, could be involved in insertion of integral membrane proteins into the membrane. The chain is Putative membrane protein insertion efficiency factor from Shewanella halifaxensis (strain HAW-EB4).